The following is a 487-amino-acid chain: UPF0276 protein SAV_2218 (487 aa).

Residues 1-285 (MVEEGTMERL…LGAIRKTLEK (285 aa)) are UPF0276. Positions 286 to 487 (AGTRAGASAG…RATRRVLLRR (202 aa)) are unknown. A disordered region spans residues 319–348 (AGPRRGGADAQAAPRAAGTEALSAASTSTP). A compositionally biased stretch (low complexity) spans 326–348 (ADAQAAPRAAGTEALSAASTSTP).

It in the N-terminal section; belongs to the UPF0276 family.

The sequence is that of UPF0276 protein SAV_2218 from Streptomyces avermitilis (strain ATCC 31267 / DSM 46492 / JCM 5070 / NBRC 14893 / NCIMB 12804 / NRRL 8165 / MA-4680).